Reading from the N-terminus, the 313-residue chain is Beta-lactamase FAR-1 (313 aa).

The first 28 residues, 1–28 (MPGVDISFLKKSGRRTMAAAAVIALLGG), serve as a signal peptide directing secretion. Cys29 carries N-palmitoyl cysteine lipidation. A lipid anchor (S-diacylglycerol cysteine) is attached at Cys29. Ser94 functions as the Acyl-ester intermediate in the catalytic mechanism. A substrate-binding site is contributed by Ser154. The Proton acceptor role is filled by Glu190. 258–260 (KTG) is a substrate binding site.

The protein belongs to the class-A beta-lactamase family.

The protein resides in the cell membrane. The enzyme catalyses a beta-lactam + H2O = a substituted beta-amino acid. With respect to regulation, inhibited by clavulanic acid, and at a low level by tazobactam and sulbactam. Functionally, confers high levels of resistance to amoxicillin, benzylpenicillin, piperacillin, ticarcillin and cephalothin. Also hydrolyzes aztreonam at a low level. Not active against ceftazidime, cefotaxime and imipenem. This Nocardia farcinica (strain IFM 10152) protein is Beta-lactamase FAR-1 (bla).